A 526-amino-acid polypeptide reads, in one-letter code: Phenylacetaldehyde oxime monooxygenase CYP71AN24 (526 aa).

A helical membrane pass occupies residues serine 22 to threonine 42. Position 465 (cysteine 465) interacts with heme.

Belongs to the cytochrome P450 family. Heme serves as cofactor. In terms of tissue distribution, expressed in seedlings and leaves.

It is found in the membrane. The catalysed reaction is (E)-phenylacetaldehyde oxime + reduced [NADPH--hemoprotein reductase] + O2 = (R)-mandelonitrile + oxidized [NADPH--hemoprotein reductase] + 2 H2O + H(+). The enzyme catalyses phenylacetonitrile + reduced [NADPH--hemoprotein reductase] + O2 = (R)-mandelonitrile + oxidized [NADPH--hemoprotein reductase] + H2O + H(+). In terms of biological role, involved in L-phenylalanine-derived cyanogenic glycoside biosynthesis, including prunasin and amygdalin defensive agents. Catalyzes the conversion of phenylacetaldoxime (PAOx) and phenylacetonitrile (PAN) into mandelonitrile (MAN). To a lower extent, can convert various aromatic aldoximes and nitriles; mediates the transformation of 4-hydroxyphenylacetaldoxime, 4-hydroxyphenylacetonitrile, indole-3-acetal-doxime and indole-3-acetonitrile into the corresponding hydroxynitriles, but cannot use the aliphatic compounds 2-methylpropanaloxime and 2-methylpropanenitrile as substrates. This Prunus mume (Japanese apricot) protein is Phenylacetaldehyde oxime monooxygenase CYP71AN24.